Reading from the N-terminus, the 158-residue chain is Biotin carboxyl carrier protein of acetyl-CoA carboxylase (158 aa).

The Biotinyl-binding domain occupies 81–157 (YATIVSPMVG…DCGQALMKVE (77 aa)). Residue lysine 123 is modified to N6-biotinyllysine.

It is found in the plastid. The protein resides in the chloroplast. Its pathway is lipid metabolism; fatty acid biosynthesis. Functionally, this protein is a component of the acetyl coenzyme A carboxylase complex; first, biotin carboxylase catalyzes the carboxylation of the carrier protein and then the transcarboxylase transfers the carboxyl group to form malonyl-CoA. The chain is Biotin carboxyl carrier protein of acetyl-CoA carboxylase (accB) from Pyropia yezoensis (Susabi-nori).